The sequence spans 326 residues: Protease inhibitor (326 aa).

A signal peptide spans 1–24 (MKTIRTGMMTLAALAVLGTNVVSA). 2 tandem repeats follow at residues 177-208 (IILHVDKETKITTADGKELKPEDLQLGMEVEA) and 272-304 (VALIVGKDTKIVSAKDNKELAPEDLKAEMKVFA). The interval 177–304 (IILHVDKETK…DLKAEMKVFA (128 aa)) is 2 X 32 AA approximate repeats.

Post-translationally, proteolytically cleaved to yield at least three forms (BBRPI-A, -B, and -C).

The protein resides in the secreted. Functionally, shows inhibitory activity towards serine proteases, such as trypsin, chymotrypsin and subtilisin. May form a trypsin-inhibitor complex in a molar ratio of 1:1. The polypeptide is Protease inhibitor (Brevibacillus choshinensis).